A 209-amino-acid chain; its full sequence is MDLHNIRADYTKQQLSKKECDANPMKQFERWLNEAIMAKVNEPTAMNMATVIDGKPTSRIVLLKEVDQQGFIFFTNYQSCKGWAIALNPYVALTFFWPELERSVRVEGIATKLSEQASDDYFASRPYASRIGAWASDQSQVLSSKRTLVAKVALLSAKYPLFVPRPAHWGGYLVQPTKIEFWQGRPSWLHDRICYWLVENEWLKERLSP.

Substrate is bound by residues 7–10 and lysine 64; that span reads RADY. FMN is bound by residues 59–64, 74–75, and lysine 81; these read RIVLLK and FT. 3 residues coordinate substrate: tyrosine 121, arginine 125, and serine 129. FMN is bound by residues 138–139, tryptophan 182, and arginine 192; that span reads QS.

This sequence belongs to the pyridoxamine 5'-phosphate oxidase family. Homodimer. FMN is required as a cofactor.

The enzyme catalyses pyridoxamine 5'-phosphate + O2 + H2O = pyridoxal 5'-phosphate + H2O2 + NH4(+). It catalyses the reaction pyridoxine 5'-phosphate + O2 = pyridoxal 5'-phosphate + H2O2. The protein operates within cofactor metabolism; pyridoxal 5'-phosphate salvage; pyridoxal 5'-phosphate from pyridoxamine 5'-phosphate: step 1/1. It participates in cofactor metabolism; pyridoxal 5'-phosphate salvage; pyridoxal 5'-phosphate from pyridoxine 5'-phosphate: step 1/1. Catalyzes the oxidation of either pyridoxine 5'-phosphate (PNP) or pyridoxamine 5'-phosphate (PMP) into pyridoxal 5'-phosphate (PLP). In Haemophilus ducreyi (strain 35000HP / ATCC 700724), this protein is Pyridoxine/pyridoxamine 5'-phosphate oxidase.